We begin with the raw amino-acid sequence, 319 residues long: MKTFGKKVVLIGDGSVGSSYAFAMVTQGVADEFVIIDIAKDKVKADVQDLNHGTVHSPSPVDVKAGEYEDCKDADLVVITAGAPQKPGETRLQLVEKNTKIMKSIVKSVMDSGFDGYFLIAANPVDILTRFVKEYTGLPAERVIGSGTVLDSARLQYLISQELGVAPSSVDASIIGEHGDTELAVWSQANVAGISVYDTLKEQTGSEAKAEEIYVNTRDAAYEIIQAKGSTYYGIALALMRISKAILNNENNVLNVSIQLDGQYGGHKGVYLGVPTLVNQHGAVKIYEMPLSAEEQALFDKSVKILEDTFDSIKYLLED.

Residues Val-16, Asp-37, Lys-42, Tyr-68, and 82–83 (GA) contribute to the NAD(+) site. Substrate-binding residues include Gln-85 and Arg-91. Residues Ser-104, 121–123 (AAN), and Ser-146 contribute to the NAD(+) site. 123-126 (NPVD) is a binding site for substrate. 151 to 154 (DSAR) provides a ligand contact to substrate. His-178 acts as the Proton acceptor in catalysis. Phosphotyrosine is present on Tyr-222. Thr-231 lines the substrate pocket.

It belongs to the LDH/MDH superfamily. LDH family. Homotetramer.

It localises to the cytoplasm. The enzyme catalyses (S)-lactate + NAD(+) = pyruvate + NADH + H(+). It functions in the pathway fermentation; pyruvate fermentation to lactate; (S)-lactate from pyruvate: step 1/1. Functionally, catalyzes the conversion of lactate to pyruvate (Potential). Contributes to S.aureus growth during nitrosative stress in both aerobically and anaerobically cultured cells, despite playing a secondary role in this resistance mechanism. This is L-lactate dehydrogenase 2 from Staphylococcus aureus (strain Mu3 / ATCC 700698).